The following is a 76-amino-acid chain: Small ribosomal subunit protein bS18 (76 aa).

The protein belongs to the bacterial ribosomal protein bS18 family. In terms of assembly, part of the 30S ribosomal subunit. Forms a tight heterodimer with protein bS6.

Binds as a heterodimer with protein bS6 to the central domain of the 16S rRNA, where it helps stabilize the platform of the 30S subunit. This is Small ribosomal subunit protein bS18 from Neisseria gonorrhoeae (strain ATCC 700825 / FA 1090).